Reading from the N-terminus, the 517-residue chain is Crotonobetaine/carnitine--CoA ligase (517 aa).

It belongs to the ATP-dependent AMP-binding enzyme family.

It catalyses the reaction 4-(trimethylamino)butanoate + ATP + CoA = 4-(trimethylamino)butanoyl-CoA + AMP + diphosphate. It carries out the reaction crotonobetaine + ATP + CoA = crotonobetainyl-CoA + AMP + diphosphate. The catalysed reaction is (R)-carnitine + ATP + CoA = (R)-carnitinyl-CoA + AMP + diphosphate. It participates in amine and polyamine metabolism; carnitine metabolism. Its function is as follows. Catalyzes the transfer of CoA to carnitine, generating the initial carnitinyl-CoA needed for the CaiB reaction cycle. Also has activity toward crotonobetaine and gamma-butyrobetaine. The polypeptide is Crotonobetaine/carnitine--CoA ligase (Escherichia coli O17:K52:H18 (strain UMN026 / ExPEC)).